The sequence spans 61 residues: Small ribosomal subunit protein uS14C (61 aa).

Zn(2+) contacts are provided by Cys-24, Cys-27, Cys-40, and Cys-43.

This sequence belongs to the universal ribosomal protein uS14 family. Zinc-binding uS14 subfamily. In terms of assembly, part of the 30S ribosomal subunit. Contacts proteins S3 and S10. It depends on Zn(2+) as a cofactor.

Binds 16S rRNA, required for the assembly of 30S particles and may also be responsible for determining the conformation of the 16S rRNA at the A site. This Bacillus licheniformis (strain ATCC 14580 / DSM 13 / JCM 2505 / CCUG 7422 / NBRC 12200 / NCIMB 9375 / NCTC 10341 / NRRL NRS-1264 / Gibson 46) protein is Small ribosomal subunit protein uS14C.